Consider the following 170-residue polypeptide: Prenyl-diphosphate phosphatase (170 aa).

The Nudix hydrolase domain maps to 25–155 (HIHRASQLIL…PGNYTPALRE (131 aa)). Residues 59 to 83 (YSVSGTVADESYEACIAREMLEEIG) carry the Nudix box motif. Positions 77 and 81 each coordinate Mg(2+).

This sequence belongs to the Nudix hydrolase family. The cofactor is Mg(2+).

The catalysed reaction is dimethylallyl diphosphate + H2O = dimethylallyl phosphate + phosphate + H(+). The enzyme catalyses isopentenyl diphosphate + H2O = isopentenyl phosphate + phosphate + H(+). It carries out the reaction (2E,6E)-farnesyl diphosphate + H2O = (2E,6E)-farnesyl phosphate + phosphate + H(+). It catalyses the reaction (2E)-geranyl diphosphate + H2O = (2E)-geranyl phosphate + phosphate + H(+). It functions in the pathway isoprenoid biosynthesis. In terms of biological role, hydrolyzes homoallylic isopentenyl diphosphate (IPP), its allylic isomer dimethylallyl diphosphate (DMAPP) and short-chain prenyl diphosphates geranyl diphosphate (GPP) and farnesyl diphosphate (FPP) to their corresponding monophosphate forms with high activity. The preferred substrate is IPP. ADP, NADPH, Ap5A and thiamine diphosphate (TPP) are weakly hydrolyzed. No hydrolysis with ATP, dNTPs, 8-OH-dGTP, NAD+, FAD or acetyl-CoA. The likely physiological role of this enzyme is to provide a substrate dimethylallyl phosphate (DMAP) for prenylated flavin mononucleotide (prenyl-FMN) synthase MM_1871 involved in the biosynthesis of prenyl-FMN, a coenzyme required in the archaea-specific mevalonate pathway. The polypeptide is Prenyl-diphosphate phosphatase (Methanosarcina mazei (strain ATCC BAA-159 / DSM 3647 / Goe1 / Go1 / JCM 11833 / OCM 88) (Methanosarcina frisia)).